The chain runs to 173 residues: Endoribonuclease YbeY (173 aa).

Positions 120, 124, and 130 each coordinate Zn(2+).

The protein belongs to the endoribonuclease YbeY family. The cofactor is Zn(2+).

It is found in the cytoplasm. In terms of biological role, single strand-specific metallo-endoribonuclease involved in late-stage 70S ribosome quality control and in maturation of the 3' terminus of the 16S rRNA. This Kineococcus radiotolerans (strain ATCC BAA-149 / DSM 14245 / SRS30216) protein is Endoribonuclease YbeY.